Reading from the N-terminus, the 295-residue chain is GTP-binding protein GEM (295 aa).

The disordered stretch occupies residues C39–S64. Residues G81–S88 and N190–D193 each bind GTP. The segment at A265–L284 is calmodulin-binding.

It belongs to the small GTPase superfamily. RGK family. As to quaternary structure, interacts with calmodulin in a Ca(2+)-dependent manner. Calmodulin binding significantly decreases GTP binding. Binds ROCK1. Post-translationally, phosphorylated on tyrosine residues.

The protein localises to the cell membrane. Its function is as follows. Could be a regulatory protein, possibly participating in receptor-mediated signal transduction at the plasma membrane. Has guanine nucleotide-binding activity but undetectable intrinsic GTPase activity. The chain is GTP-binding protein GEM (Gem) from Mus musculus (Mouse).